The following is an 845-amino-acid chain: Synaptonemal complex protein 1 (845 aa).

An interaction with SYCE3 region spans residues 59–215 (ETRQVYVDLN…YQLTEEKEAQ (157 aa)). Coiled coils occupy residues 64–211 (YVDL…LTEE) and 244–544 (LRTE…EIEV). A required for pH-induced assembly of C-terminal ends into antiparallel tetramers region spans residues 550–644 (EKLLGEVEKA…VSLKKQLEIE (95 aa)). The Nuclear localization signal motif lies at 553–556 (LGEV). Residues 620–663 (KTALETELSNIRNELVSLKKQLEIEREEKEKLKLEKENTAILKD) are a coiled coil. Positions 657-845 (NTAILKDKKD…RLKEAEKLFA (189 aa)) are DNA-binding. Serine 676 carries the phosphoserine modification. Residues 684 to 703 (FDSKTTPSQNISRISSSMES) are compositionally biased toward polar residues. The disordered stretch occupies residues 684 to 709 (FDSKTTPSQNISRISSSMESGKTKDN). Positions 753–756 (KKRK) match the Nuclear localization signal motif. A disordered region spans residues 786–808 (LYNNNSPNSHLTPKQTPLSLSTP).

As to quaternary structure, structural component of synaptonemal complexes. Homotetramer that consists of an N-terminal four-helical bundle that bifurcates into two elongated C-terminal dimeric coiled coils. This tetrameric building block potentially self-assembles into a supramolecular zipper-like lattice to mediate meiotic chromosome synapsis. Self-assembly is likely initiated by local proton density at chromosome axis, which is predicted to trigger antiparallel back to back assembly of adjacent C-terminal ends into tetrameric structures that anchor to chromosomal DNA. Then the N-terminal ends are predicted to undergo cooperative antiparallel head to head assembly at the midline of synaptonemal complexes central element to form a zipper-like lattice between properly aligned homologous chromosomes. The nascent synapsis generated by SYCP1 is stabilized through interaction with central element proteins SYCE1 and SYCE2. Interacts (via tetrameric core) with SYCE3; the interaction remodels SYCP1 homotetramers to 2:1 heterotrimers with SYCE3. SYCP1/SYCE3 heterotrimers form lattice assemblies as part of the mature synaptonemal complex via both lateral and head-to-head interactions. Forms a complex with EWSR1, PRDM9, SYCP3 and REC8; complex formation is dependent of phosphorylated form of REC8 and requires PRDM9 bound to hotspot DNA; EWSR1 joins PRDM9 with the chromosomal axis through REC8. Interacts with SPO16.

It localises to the nucleus. The protein resides in the chromosome. The protein localises to the centromere. In terms of biological role, major component of the transverse filaments of synaptonemal complexes, formed between homologous chromosomes during meiotic prophase. Required for normal assembly of the central element of the synaptonemal complexes. Required for normal centromere pairing during meiosis. Required for normal meiotic chromosome synapsis during oocyte and spermatocyte development and for normal male and female fertility. The sequence is that of Synaptonemal complex protein 1 from Mesocricetus auratus (Golden hamster).